The primary structure comprises 436 residues: GTPase Der (436 aa).

EngA-type G domains are found at residues 3–168 (PLIA…PESD) and 177–352 (IRLA…DNRA). GTP contacts are provided by residues 9 to 16 (GRPNVGKS), 56 to 60 (DTGGY), 120 to 123 (NKVE), 183 to 190 (GRPNVGKS), 230 to 234 (DTAGL), and 295 to 298 (NKWD). Residues 353-436 (RKISTSALNR…VTISLRFLQK (84 aa)) enclose the KH-like domain.

This sequence belongs to the TRAFAC class TrmE-Era-EngA-EngB-Septin-like GTPase superfamily. EngA (Der) GTPase family. In terms of assembly, associates with the 50S ribosomal subunit.

In terms of biological role, GTPase that plays an essential role in the late steps of ribosome biogenesis. This Chlorobium phaeovibrioides (strain DSM 265 / 1930) (Prosthecochloris vibrioformis (strain DSM 265)) protein is GTPase Der.